A 475-amino-acid chain; its full sequence is MADMQNLVERLERAVGRLEAVSHTSDMHRGYGDSPSKAGAAPYVQAFDSLLAGPVAEYLKISKEIGGDVQKHAEMVHTGLKLERALLVTASQCQQPADNKLSDLLAPISEQIKEVITFREKNRGSKLFNHLSAVSESIQALGWVAMAPKPGPYVKEMNDAAMFYTNRVLKEYKDVDKKHVDWVKAYLSIWTELQAYIKEFHTTGLVWSKTGPVAKELSGLPSGPSAGSGPPPPPPGPPPPPVSTSSGSDESASRSALFAQINQGESITHALKHVSDDMKTHKNPALKAQSGPVRSGPKPFSAPKPQTSPSPKPATKKEPAVLELEGKKWRVENQENVSNLVIDDTELKQVAYIYKCVNTTLQIKGKINSITVDNCKKLGLVFDDVVGIVEIINSRDVKVQVMGKVPTISINKTDGCHAYLSKNSLDCEIVSAKSSEMNVLIPTEGGDFNEFPVPEQFKTLWNGQKLVTTVTEIAG.

Ala-2 carries the post-translational modification N-acetylalanine. At Tyr-31 the chain carries Phosphotyrosine. The residue at position 34 (Ser-34) is a Phosphoserine. The residue at position 81 (Lys-81) is an N6-acetyllysine. Disordered stretches follow at residues 216–255 (ELSG…ASRS) and 278–318 (MKTH…TKKE). The segment covering 218–228 (SGLPSGPSAGS) has biased composition (low complexity). Pro residues predominate over residues 229–242 (GPPPPPPGPPPPPV). Residues 243-255 (STSSGSDESASRS) are compositionally biased toward low complexity. The residue at position 287 (Lys-287) is an N6-methyllysine. Phosphoserine is present on residues Ser-290, Ser-295, and Ser-301. The span at 300–312 (FSAPKPQTSPSPK) shows a compositional bias: pro residues. Residue Thr-307 is modified to Phosphothreonine. Ser-308 and Ser-310 each carry phosphoserine. A C-CAP/cofactor C-like domain is found at 313 to 453 (PATKKEPAVL…EGGDFNEFPV (141 aa)). A Glycyl lysine isopeptide (Lys-Gly) (interchain with G-Cter in SUMO1) cross-link involves residue Lys-348.

It belongs to the CAP family. As to quaternary structure, homodimer. Binds actin monomers.

The protein localises to the cell membrane. In terms of biological role, directly regulates filament dynamics and has been implicated in a number of complex developmental and morphological processes, including mRNA localization and the establishment of cell polarity. The polypeptide is Adenylyl cyclase-associated protein 1 (CAP1) (Macaca fascicularis (Crab-eating macaque)).